Reading from the N-terminus, the 57-residue chain is uncharacterized protein (57 aa).

A run of 2 helical transmembrane segments spans residues 4 to 26 (VNILSYFAFSVEAVLFPMSSELW) and 33 to 55 (ALGYGVEKICLYSFVLVLPIAIL).

It localises to the cell membrane. This is an uncharacterized protein from Methanocaldococcus jannaschii (strain ATCC 43067 / DSM 2661 / JAL-1 / JCM 10045 / NBRC 100440) (Methanococcus jannaschii).